Here is a 158-residue protein sequence, read N- to C-terminus: 6,7-dimethyl-8-ribityllumazine synthase (158 aa).

5-amino-6-(D-ribitylamino)uracil contacts are provided by residues phenylalanine 22, alanine 56 to glutamate 58, and valine 80 to isoleucine 82. Glutamate 85–threonine 86 lines the (2S)-2-hydroxy-3-oxobutyl phosphate pocket. Catalysis depends on histidine 88, which acts as the Proton donor. Residue asparagine 113 participates in 5-amino-6-(D-ribitylamino)uracil binding. Arginine 127 lines the (2S)-2-hydroxy-3-oxobutyl phosphate pocket.

Belongs to the DMRL synthase family.

It catalyses the reaction (2S)-2-hydroxy-3-oxobutyl phosphate + 5-amino-6-(D-ribitylamino)uracil = 6,7-dimethyl-8-(1-D-ribityl)lumazine + phosphate + 2 H2O + H(+). Its pathway is cofactor biosynthesis; riboflavin biosynthesis; riboflavin from 2-hydroxy-3-oxobutyl phosphate and 5-amino-6-(D-ribitylamino)uracil: step 1/2. Catalyzes the formation of 6,7-dimethyl-8-ribityllumazine by condensation of 5-amino-6-(D-ribitylamino)uracil with 3,4-dihydroxy-2-butanone 4-phosphate. This is the penultimate step in the biosynthesis of riboflavin. The chain is 6,7-dimethyl-8-ribityllumazine synthase from Neisseria meningitidis serogroup C (strain 053442).